The primary structure comprises 122 residues: Large ribosomal subunit protein uL14 (122 aa).

Belongs to the universal ribosomal protein uL14 family. As to quaternary structure, part of the 50S ribosomal subunit. Forms a cluster with proteins L3 and L19. In the 70S ribosome, L14 and L19 interact and together make contacts with the 16S rRNA in bridges B5 and B8.

In terms of biological role, binds to 23S rRNA. Forms part of two intersubunit bridges in the 70S ribosome. In Micrococcus luteus (strain ATCC 4698 / DSM 20030 / JCM 1464 / CCM 169 / CCUG 5858 / IAM 1056 / NBRC 3333 / NCIMB 9278 / NCTC 2665 / VKM Ac-2230) (Micrococcus lysodeikticus), this protein is Large ribosomal subunit protein uL14.